The chain runs to 205 residues: Urease accessory protein UreG (205 aa).

A GTP-binding site is contributed by glycine 14–threonine 21.

It belongs to the SIMIBI class G3E GTPase family. UreG subfamily. Homodimer. UreD, UreF and UreG form a complex that acts as a GTP-hydrolysis-dependent molecular chaperone, activating the urease apoprotein by helping to assemble the nickel containing metallocenter of UreC. The UreE protein probably delivers the nickel.

It is found in the cytoplasm. Its function is as follows. Facilitates the functional incorporation of the urease nickel metallocenter. This process requires GTP hydrolysis, probably effectuated by UreG. This chain is Urease accessory protein UreG, found in Escherichia coli.